Consider the following 433-residue polypeptide: Pyrimidine-nucleoside phosphorylase (433 aa).

Phosphate is bound at residue 81–83 (KHS). Residues glycine 88 and threonine 90 each contribute to the K(+) site. Phosphate is bound by residues threonine 92, 108–110 (KMS), and threonine 120. Residues arginine 168 and lysine 187 each coordinate substrate. The K(+) site is built by leucine 243, alanine 246, and glutamate 255.

Belongs to the thymidine/pyrimidine-nucleoside phosphorylase family. In terms of assembly, homodimer. Requires K(+) as cofactor.

The enzyme catalyses uridine + phosphate = alpha-D-ribose 1-phosphate + uracil. It carries out the reaction thymidine + phosphate = 2-deoxy-alpha-D-ribose 1-phosphate + thymine. It catalyses the reaction 2'-deoxyuridine + phosphate = 2-deoxy-alpha-D-ribose 1-phosphate + uracil. Its function is as follows. Catalyzes phosphorolysis of the pyrimidine nucleosides uridine, thymidine and 2'-deoxyuridine with the formation of the corresponding pyrimidine base and ribose-1-phosphate. In Staphylococcus epidermidis (strain ATCC 35984 / DSM 28319 / BCRC 17069 / CCUG 31568 / BM 3577 / RP62A), this protein is Pyrimidine-nucleoside phosphorylase (pdp).